A 270-amino-acid polypeptide reads, in one-letter code: Sec-independent protein translocase protein TatC (270 aa).

6 helical membrane passes run 25 to 45, 75 to 95, 111 to 131, 156 to 176, 195 to 211, and 213 to 233; these read FIAV…LFDI, VSLL…FWMF, VVIL…FIVF, LGFA…PLVL, KYAI…ITPP, and VVTQ…SIIG. Residues 243–270 are disordered; sequence SDEEEAAENSDVQTDKSTDDTTPGEDQN.

This sequence belongs to the TatC family. The Tat system comprises two distinct complexes: a TatABC complex, containing multiple copies of TatA, TatB and TatC subunits, and a separate TatA complex, containing only TatA subunits. Substrates initially bind to the TatABC complex, which probably triggers association of the separate TatA complex to form the active translocon.

It is found in the cell inner membrane. Its function is as follows. Part of the twin-arginine translocation (Tat) system that transports large folded proteins containing a characteristic twin-arginine motif in their signal peptide across membranes. Together with TatB, TatC is part of a receptor directly interacting with Tat signal peptides. This chain is Sec-independent protein translocase protein TatC, found in Desulforapulum autotrophicum (strain ATCC 43914 / DSM 3382 / VKM B-1955 / HRM2) (Desulfobacterium autotrophicum).